The primary structure comprises 262 residues: Flap endonuclease Xni (262 aa).

Residue aspartate 112 coordinates Mg(2+). The 88-residue stretch at 171 to 258 (QQLNDYWAIT…GFNLKDLRYT (88 aa)) folds into the 5'-3' exonuclease domain. 3 residues coordinate K(+): isoleucine 179, valine 190, and isoleucine 193. The interaction with DNA stretch occupies residues 192–197 (GIGSKG).

It belongs to the Xni family. The cofactor is Mg(2+). K(+) serves as cofactor.

Has flap endonuclease activity. During DNA replication, flap endonucleases cleave the 5'-overhanging flap structure that is generated by displacement synthesis when DNA polymerase encounters the 5'-end of a downstream Okazaki fragment. In Psychromonas ingrahamii (strain DSM 17664 / CCUG 51855 / 37), this protein is Flap endonuclease Xni.